Consider the following 445-residue polypeptide: Xylose isomerase (445 aa).

Catalysis depends on residues His107 and Asp110. Mg(2+) contacts are provided by Glu238, Glu274, His277, Asp302, Asp313, Asp315, and Asp345.

The protein belongs to the xylose isomerase family. As to quaternary structure, homotetramer. It depends on Mg(2+) as a cofactor.

It is found in the cytoplasm. It carries out the reaction alpha-D-xylose = alpha-D-xylulofuranose. The sequence is that of Xylose isomerase from Bacillus velezensis (strain DSM 23117 / BGSC 10A6 / LMG 26770 / FZB42) (Bacillus amyloliquefaciens subsp. plantarum).